The chain runs to 254 residues: MNSQFAGLTREACVALLASYPLSVGILAGQWIALHRYLQQLEALNQPLLHLDLMDGQFCPQFTVGPWAVGQLPQTFIKDVHLMVADQWAAAQACVKAGAHCITLQAEGDIHLHHTLSWLGQQTVPVIDGEMPVIRGISLCPATPLDVIIPILSDVEVIQLLAVNPGYGSKMRSSDLYERVAQLLCLLGDKREGKIIVIDGSLTQDQLPSLIAQGIDRVVSGSALFRDDRLVENTRSWRAMFKVAGDTTFLPSTA.

A helical transmembrane segment spans residues 14–34 (VALLASYPLSVGILAGQWIAL). His50, Asp52, and His81 together coordinate a divalent metal cation. The active-site Proton acceptor is the Asp52. Substrate is bound by residues His81, 166 to 169 (GYGS), 199 to 201 (DGS), and 221 to 222 (GS). Asp199 serves as a coordination point for a divalent metal cation. The active-site Proton donor is the Asp199.

The protein belongs to the ribulose-phosphate 3-epimerase family. Requires a divalent metal cation as cofactor.

It is found in the cell membrane. The sequence is that of Putative epimerase LsrE (lsrE) from Salmonella typhi.